Reading from the N-terminus, the 207-residue chain is Thaumatin-like protein 1 (207 aa).

Cystine bridges form between Cys9–Cys202, Cys50–Cys60, Cys65–Cys71, Cys117–Cys191, Cys122–Cys174, Cys130–Cys140, Cys144–Cys153, and Cys154–Cys161.

It belongs to the thaumatin family. Monomer. In terms of processing, not glycosylated.

The protein resides in the secreted. Functionally, acidic thaumatin-like protein. Exhibits weak beta-1,3-glucanase activity with laminarin as substrate. This Manilkara zapota (Sapodilla plum) protein is Thaumatin-like protein 1 (TLP1).